A 163-amino-acid chain; its full sequence is UPF0262 protein RPC_4416 (163 aa).

Belongs to the UPF0262 family.

In Rhodopseudomonas palustris (strain BisB18), this protein is UPF0262 protein RPC_4416.